A 2352-amino-acid polypeptide reads, in one-letter code: MAELVRPKKPKHRERAQSDYTPPIPDRPAIVNGLRLPAAPSHTIEDLPERSASPEPEDQDISLTEDSLKREEASEPLKDVRSSPVRPAPPPPRVSQEREAPPIPPRSMIFPRSTSMVAESRKESTTAVAPKRSVAVASYPAVPELAELPSYTDALQHPQVYPSINGGLQHSHSATAIPEKTRFSAPVERERVREGEAPPMYPSIKTYERNEHGLMTEENLVTFYHNPLYEHAEMFVDQFIKTEEVPTQSGSLFPLLARLRTVCDLMTVSEVKGKENTEELQKCLRECWVQQSLSVDAKGKCGDNNDGTGRASYFSFELQQAVLDQMKKLLSTNRSNLMDHSVCEETSFRSIALQIQWQVIIINNNFMAENGLSTNCPPSLIASVPMTPGRVALRTALSDIFYHLRYPRLSKRFIDTLVGWIKELTCVLNMRQSCDDGIFLLCHLLRLPSPIDQWASPFVQTFIQSQSAPKLKLDYCVALLTHLLNPIKARESFLRHVAQSEKEESTWEILADDDDGEANEFSFVTINESDLTAFLDQFPISELYSIAYLAFTSYSDKGSQFTAMIAFQLLLMKILDNGLTSYSQPGYKMFCKQIGISLKHSVRELCSNWRLIRDQVRPGEEHHLQKEVDRVVLLALNYLIHQDTLGLFQFVVSLPYAVVSEECRSRCEYALRSNKKMSIHEIYDTPICEVRARISSQGISKRIGALGAQDSEFLVNSLASIGSYSNSDVSQLLKELIDVCFCDEDTRDDLYKCGGEAIGQILIKRPETLHQLLTIIDRNLQHMDSYAINVLSSSRLFECRLTEPMISIIGKWLINNPPEHGANRLARRVLSGLHWGLAVDGHNLWIDVDVHTIAADTVVKAHSVHCSRSNSMISKSINKISKLASKVGDAESLFQQFCWDLLVKLKLPTIPSSLVQNDLTAHYVRIVQNCEDDVVVYLEKGVPLLSDLVTSGSSVASVVLLSRLIAQHYQNVNLMAADKNFMTTFERLLHIDQLPYAVQWLSGPSSTPTPIVKLICSAISYYSAKLPPRDYLRAWITLLCAARTGWNEDAVTYQIVGTIARIAFVNDTHKLYEITGIIFQAYQQQLAAEKNQSKGIMSMFSSDNTVSPLIPDSMLSISPFASYVMLRVEQKSFNTFYGHFFETLTKKDKYTLDNAVKKASSKCSITVPVERLAIFRWAKLVTVCNDHQLLPILLQQLSGSAYRLRKANNLNLCYARRLIDDPQMQDVMAACRKAIEESTIETKGLSKAVVGWLFTKHEVTRTGFDFSVFDLDYLLQLILAGDKNMWLDFVNMPYFNSEEFSERKLYSVTCQLSPKNRESPLPPEIGSPRSRSSAKPFPVLPVHSGLPQAPLIDPSILFQQHTVLQLASPFINTIKQLSKQFAQSGDRMSMDDDSYCKQIKALYQPTQQTIPVEIRCSYCSKPKACTMSIKPNVLNSEIDLQMTQNRTKRFEFWNELYASIVDKAAVATASIEHLSVLVAKMTSALHPGTRNNVQLTGHSLFYLITSSVGENELLFSVASDSFCNSLRSLGEEYVKFRPEEQMDVMQLALDGFVLSEPLVEVFTPEVLNSDDLCTAYRKLSDAVRMPERSKMALQLLGRLGMQQAAAGLPPHQFAALLPIAFANLASQPDPSSPLHALCLQHVIFFVFHHFPDNIVNGLDLTLDGCNTNSTPASLLDAIVDKLDANDYLKKKNSFDLGAAKADECARILSKRLDEARTKLPNFYGIWSRYLDSVTRLAQLFLFVPIRDGYEPNKSVSVLQRECYEYFTRVAAVFSPLIAPYSPTHPPFSTSHEAQAMLVLDRFVDFLSALHFNSSIPPGMQNIQSLVWQYYCEKLSILTHGTQHYYDVIERQLVRLNWQALWPSRLAITAMENCLDTRSQDCASFISQMVARIPWSNILQTMHEDSRPSYLASLFGVLVRLAARPRNYDKVRASLLELCKSFSLRSDWNKIYPEDAAGIASAVTKCLPSDSLSNPVEMVSVIQVIWRKICCFVVREPFSEVSLQKQKLWIQTESSLLLKAESSQIPAAYNSLISDVNALALNHSNLREFRVVTRELTAMWKNITDAKLGEALVSIWSEYLAANPTSPLVLTSVNTLVDSLNIDQLTTALKVIEKVICAYFLRTDSNWAELLHWIQFPTGSLKSIKSYLMTVPSSENKVQMLPLTLKIFMDYGGVDENKFFDLHHYVISIRPKHVASESGFICLLARHLQWMANRSSALPAHFAPSDDLLSSLIKYLGKASKDESSFLTALISSKKTAYSQKMRVTLHILELYLTQQTLGEGKRPRCDANSPVLNSRISTLKDLAQQKSNQNMSNAFNKATAYFVQIETHRIQSSPKLLLEIGRSAFGDLFLTD.

2 disordered regions span residues 1-112 (MAEL…IFPR) and 1315-1335 (KNRESPLPPEIGSPRSRSSAK). Residues 66-81 (DSLKREEASEPLKDVR) are compositionally biased toward basic and acidic residues.

It belongs to the EPG5 family. Expressed in pharyngeal and body wall muscles and intestine cells.

The protein localises to the cytoplasm. It is found in the cytoplasmic vesicle. It localises to the phagosome membrane. Involved in the maturation of autophagosomes into autolysosomes during starvation-induced autotrophy. Specifically, involved in the clearance of apoptotic cells by promoting the delivery of engulfed apoptotic cells to the lysosome. The polypeptide is Ectopic P granules protein 5 (Caenorhabditis elegans).